The following is a 488-amino-acid chain: Homoserine O-acetyltransferase (488 aa).

In terms of domain architecture, AB hydrolase-1 spans 47-355 (NAILVCHALT…SYGHDAFLLE (309 aa)). Catalysis depends on Ser-153, which acts as the Nucleophile. Arg-222 contributes to the substrate binding site. Active-site residues include Asp-316 and His-349. Asp-350 is a substrate binding site. CBS domains follow at residues 376-433 (MTEK…CSKL) and 437-488 (MTRD…RLIG).

This sequence belongs to the AB hydrolase superfamily. MetX family. Homodimer.

The protein localises to the cytoplasm. It catalyses the reaction L-homoserine + acetyl-CoA = O-acetyl-L-homoserine + CoA. The protein operates within amino-acid biosynthesis; L-methionine biosynthesis via de novo pathway; O-acetyl-L-homoserine from L-homoserine: step 1/1. In terms of biological role, transfers an acetyl group from acetyl-CoA to L-homoserine, forming acetyl-L-homoserine. The chain is Homoserine O-acetyltransferase from Methanococcoides burtonii (strain DSM 6242 / NBRC 107633 / OCM 468 / ACE-M).